The following is a 596-amino-acid chain: Nitrite reductase (596 aa).

The N-terminal stretch at 1–29 (MRQRTPFARPGLLASAALALVLGPLAASA) is a signal peptide. The tract at residues 30-76 (QEQVAPPKDPAAALEDHKTRTDNRYEPSLDNLAQQDVAAPGAPEGVS) is N-terminal tail. Residue H46 participates in heme c binding. Residues Y54 and S57 each coordinate heme d1. The Cytochrome c domain maps to 77 to 162 (ALSDAQYNEA…ANYLLLDPAA (86 aa)). 5 residues coordinate heme c: C94, C97, H98, K108, and Y122. Residues W138, R203, H229, R232, R245, R272, Y292, R420, Q536, and T583 each contribute to the heme d1 site. The segment at 163 to 596 (PPEFGMKEMR…NVYNTMTDTY (434 aa)) is D1-heme domain.

Homodimer. The cofactor is heme c. Heme serves as cofactor.

It localises to the periplasm. It catalyses the reaction nitric oxide + Fe(III)-[cytochrome c] + H2O = Fe(II)-[cytochrome c] + nitrite + 2 H(+). The enzyme catalyses A + NH4(+) + H2O = hydroxylamine + AH2 + H(+). This is Nitrite reductase (nirS) from Paracoccus pantotrophus (Thiosphaera pantotropha).